The primary structure comprises 209 residues: Redox-sensing transcriptional repressor Rex (209 aa).

Residues 16-55 (LYYRFIQNLSLSGKQRVSSAELSEAVKVDSATIRRDFSYF) constitute a DNA-binding region (H-T-H motif). An NAD(+)-binding site is contributed by 90–95 (GVGNLG).

Belongs to the transcriptional regulatory Rex family. In terms of assembly, homodimer.

Its subcellular location is the cytoplasm. Modulates transcription in response to changes in cellular NADH/NAD(+) redox state. The protein is Redox-sensing transcriptional repressor Rex of Bacillus cereus (strain Q1).